The following is a 338-amino-acid chain: E3 ubiquitin-protein ligase RING1 (338 aa).

The segment at 102–124 (TTTSSSASIDPNNPSLSGPTRSG) is disordered. The segment covering 110-121 (IDPNNPSLSGPT) has biased composition (polar residues). The RING-type; atypical zinc-finger motif lies at 224–265 (CAVCMDDFEEGTEAKQMPCKHLYHKDCLLPWLELHNSCPVCR). 2 stretches are compositionally biased toward basic and acidic residues: residues 267-279 (ELPT…ERRV) and 298-309 (SDGDNRTVERSF). A disordered region spans residues 267–338 (ELPTDDPDYE…NAETRQEDLD (72 aa)).

In terms of processing, auto-ubiquitinated as part of the enzymatic reaction. As to expression, mostly expressed in cotton fibers, and, to a lower extent, in leaves and flowers.

The enzyme catalyses S-ubiquitinyl-[E2 ubiquitin-conjugating enzyme]-L-cysteine + [acceptor protein]-L-lysine = [E2 ubiquitin-conjugating enzyme]-L-cysteine + N(6)-ubiquitinyl-[acceptor protein]-L-lysine.. It functions in the pathway protein modification; protein ubiquitination. Its function is as follows. E3 ubiquitin-protein ligase which accepts ubiquitin from an E2 ubiquitin-conjugating enzyme in the form of a thioester and then directly transfers the ubiquitin to targeted substrates. Promotes polyubiquitination of target proteins. This Gossypium hirsutum (Upland cotton) protein is E3 ubiquitin-protein ligase RING1 (RING1).